The chain runs to 285 residues: Protoheme IX farnesyltransferase (285 aa).

7 helical membrane passes run 16–36, 40–60, 106–126, 136–156, 165–185, 217–237, and 265–285; these read AKPK…ILAF, WYNL…SMII, LLAN…YVFV, WLNI…GYAA, SLLL…ALAL, ILMI…YVII, and YKFS…SFIL.

Belongs to the UbiA prenyltransferase family. Protoheme IX farnesyltransferase subfamily.

Its subcellular location is the cell membrane. It carries out the reaction heme b + (2E,6E)-farnesyl diphosphate + H2O = Fe(II)-heme o + diphosphate. It functions in the pathway porphyrin-containing compound metabolism; heme O biosynthesis; heme O from protoheme: step 1/1. In terms of biological role, converts heme B (protoheme IX) to heme O by substitution of the vinyl group on carbon 2 of heme B porphyrin ring with a hydroxyethyl farnesyl side group. The chain is Protoheme IX farnesyltransferase from Sulfolobus acidocaldarius (strain ATCC 33909 / DSM 639 / JCM 8929 / NBRC 15157 / NCIMB 11770).